Reading from the N-terminus, the 106-residue chain is Insulin-2 (106 aa).

The N-terminal stretch at 1–23 is a signal peptide; the sequence is MALWMQCLPLVLVLLFSTPNTEA. 3 disulfides stabilise this stretch: cysteine 30–cysteine 92, cysteine 42–cysteine 105, and cysteine 91–cysteine 96. The propeptide at 56 to 83 is c peptide; that stretch reads DIEQAQVNGPQDNELDGMQFQPQEYQKM.

This sequence belongs to the insulin family. Heterodimer of a B chain and an A chain linked by two disulfide bonds.

It is found in the secreted. Insulin decreases blood glucose concentration. It increases cell permeability to monosaccharides, amino acids and fatty acids. It accelerates glycolysis, the pentose phosphate cycle, and glycogen synthesis in liver. The sequence is that of Insulin-2 (ins-b) from Xenopus laevis (African clawed frog).